Here is a 304-residue protein sequence, read N- to C-terminus: L-lactate dehydrogenase (304 aa).

NAD(+) contacts are provided by residues Val-11, Asp-32, Arg-37, and 76–77 (GA). Substrate contacts are provided by residues Gln-79, Arg-85, and 117 to 120 (NPVD). Ser-138 contacts NAD(+). 143–146 (DSAR) lines the substrate pocket. Beta-D-fructose 1,6-bisphosphate-binding residues include Arg-148 and His-163. The active-site Proton acceptor is His-170. A substrate-binding site is contributed by Thr-225.

Belongs to the LDH/MDH superfamily. LDH family. Homotetramer.

The protein resides in the cytoplasm. The enzyme catalyses (S)-lactate + NAD(+) = pyruvate + NADH + H(+). It participates in fermentation; pyruvate fermentation to lactate; (S)-lactate from pyruvate: step 1/1. Its activity is regulated as follows. Allosterically activated by fructose 1,6-bisphosphate (FBP). Its function is as follows. Catalyzes the conversion of lactate to pyruvate. In Deinococcus radiodurans (strain ATCC 13939 / DSM 20539 / JCM 16871 / CCUG 27074 / LMG 4051 / NBRC 15346 / NCIMB 9279 / VKM B-1422 / R1), this protein is L-lactate dehydrogenase.